A 681-amino-acid polypeptide reads, in one-letter code: Peroxisomal acyl-coenzyme A oxidase 2 (681 aa).

Residue Ser9 is modified to Phosphoserine. Lys66, Lys137, Lys453, Lys561, and Lys667 each carry N6-succinyllysine. The Microbody targeting signal signature appears at Ser679–Leu681.

This sequence belongs to the acyl-CoA oxidase family. As to quaternary structure, homodimer. It depends on FAD as a cofactor. As to expression, liver and kidney.

It localises to the peroxisome. The catalysed reaction is (25R)-3alpha,7alpha,12alpha-trihydroxy-5beta-cholestan-26-oyl-CoA + A + H2O = (24R,25R)-3alpha,7alpha,12alpha,24-tetrahydroxy-5beta-cholestan-26-oyl-CoA + AH2. The enzyme catalyses (25S)-3alpha,7alpha,12alpha-trihydroxy-5beta-cholestan-26-oyl-CoA + O2 = (24E)-3alpha,7alpha,12alpha-trihydroxy-5beta-cholest-24-en-26-oyl-CoA + H2O2. Oxidizes the CoA esters of the bile acid intermediates di- and tri-hydroxycholestanoic acids. Capable of oxidizing short as well as long chain 2-methyl branched fatty acids. The protein is Peroxisomal acyl-coenzyme A oxidase 2 of Oryctolagus cuniculus (Rabbit).